The following is a 217-amino-acid chain: NADH-quinone oxidoreductase subunit I (217 aa).

The disordered stretch occupies residues 22-41 (TTEQYPEEKKETAPRFHGRH). 4Fe-4S ferredoxin-type domains lie at 43–73 (LNRHPDGLEKCVGCELCAWACPADAIYVEGA) and 89–118 (RVYQINYLRCILCGLCIEACPTRALTMSND). Positions 53, 56, 59, 63, 98, 101, 104, and 108 each coordinate [4Fe-4S] cluster. A disordered region spans residues 193–217 (ARRTAGEHSRADEVPAHGAGSERPR).

Belongs to the complex I 23 kDa subunit family. As to quaternary structure, NDH-1 is composed of 14 different subunits. Subunits NuoA, H, J, K, L, M, N constitute the membrane sector of the complex. [4Fe-4S] cluster is required as a cofactor.

It is found in the cell membrane. It catalyses the reaction a quinone + NADH + 5 H(+)(in) = a quinol + NAD(+) + 4 H(+)(out). In terms of biological role, NDH-1 shuttles electrons from NADH, via FMN and iron-sulfur (Fe-S) centers, to quinones in the respiratory chain. The immediate electron acceptor for the enzyme in this species is believed to be ubiquinone. Couples the redox reaction to proton translocation (for every two electrons transferred, four hydrogen ions are translocated across the cytoplasmic membrane), and thus conserves the redox energy in a proton gradient. The chain is NADH-quinone oxidoreductase subunit I from Frankia casuarinae (strain DSM 45818 / CECT 9043 / HFP020203 / CcI3).